Reading from the N-terminus, the 73-residue chain is ATP synthase subunit c (73 aa).

The next 2 membrane-spanning stretches (helical) occupy residues 4–24 and 51–71; these read LAIG…GIGI and GALA…IIIF.

It belongs to the ATPase C chain family. F-type ATPases have 2 components, F(1) - the catalytic core - and F(0) - the membrane proton channel. F(1) has five subunits: alpha(3), beta(3), gamma(1), delta(1), epsilon(1). F(0) has three main subunits: a(1), b(2) and c(10-14). The alpha and beta chains form an alternating ring which encloses part of the gamma chain. F(1) is attached to F(0) by a central stalk formed by the gamma and epsilon chains, while a peripheral stalk is formed by the delta and b chains.

The protein localises to the cell membrane. Functionally, f(1)F(0) ATP synthase produces ATP from ADP in the presence of a proton or sodium gradient. F-type ATPases consist of two structural domains, F(1) containing the extramembraneous catalytic core and F(0) containing the membrane proton channel, linked together by a central stalk and a peripheral stalk. During catalysis, ATP synthesis in the catalytic domain of F(1) is coupled via a rotary mechanism of the central stalk subunits to proton translocation. In terms of biological role, key component of the F(0) channel; it plays a direct role in translocation across the membrane. A homomeric c-ring of between 10-14 subunits forms the central stalk rotor element with the F(1) delta and epsilon subunits. The sequence is that of ATP synthase subunit c from Caldanaerobacter subterraneus subsp. tengcongensis (strain DSM 15242 / JCM 11007 / NBRC 100824 / MB4) (Thermoanaerobacter tengcongensis).